We begin with the raw amino-acid sequence, 88 residues long: Small ribosomal subunit protein bS16 (88 aa).

The protein belongs to the bacterial ribosomal protein bS16 family.

The protein is Small ribosomal subunit protein bS16 of Geotalea uraniireducens (strain Rf4) (Geobacter uraniireducens).